Reading from the N-terminus, the 188-residue chain is ATP synthase subunit b (188 aa).

The chain crosses the membrane as a helical span at residues 21 to 41 (ILPHLGELIVGIIFAIIIYAV).

Belongs to the ATPase B chain family. In terms of assembly, F-type ATPases have 2 components, F(1) - the catalytic core - and F(0) - the membrane proton channel. F(1) has five subunits: alpha(3), beta(3), gamma(1), delta(1), epsilon(1). F(0) has three main subunits: a(1), b(2) and c(10-14). The alpha and beta chains form an alternating ring which encloses part of the gamma chain. F(1) is attached to F(0) by a central stalk formed by the gamma and epsilon chains, while a peripheral stalk is formed by the delta and b chains.

The protein resides in the cell membrane. In terms of biological role, f(1)F(0) ATP synthase produces ATP from ADP in the presence of a proton or sodium gradient. F-type ATPases consist of two structural domains, F(1) containing the extramembraneous catalytic core and F(0) containing the membrane proton channel, linked together by a central stalk and a peripheral stalk. During catalysis, ATP synthesis in the catalytic domain of F(1) is coupled via a rotary mechanism of the central stalk subunits to proton translocation. Its function is as follows. Component of the F(0) channel, it forms part of the peripheral stalk, linking F(1) to F(0). The chain is ATP synthase subunit b from Kineococcus radiotolerans (strain ATCC BAA-149 / DSM 14245 / SRS30216).